The primary structure comprises 101 residues: MIPGELVIDDGEHTLNAGRHTIALVVANTGDRPVQVGSHYHFHEVNDALSFDRAAARGFRLNIAAGTAVRFEPGQTRTIELVELGGARAVYGFQGKVMGPL.

Belongs to the urease beta subunit family. As to quaternary structure, heterotrimer of UreA (gamma), UreB (beta) and UreC (alpha) subunits. Three heterotrimers associate to form the active enzyme.

The protein localises to the cytoplasm. It carries out the reaction urea + 2 H2O + H(+) = hydrogencarbonate + 2 NH4(+). It functions in the pathway nitrogen metabolism; urea degradation; CO(2) and NH(3) from urea (urease route): step 1/1. This is Urease subunit beta from Burkholderia pseudomallei (strain 668).